A 521-amino-acid polypeptide reads, in one-letter code: Replicase polyprotein 1ab (521 aa).

The 58-residue stretch at 1–58 (GGGGQSFLAADNAVLVSTQCYKRHSYVEIPSNLLVQNGMSLKDGANLYVYKRVNGAFV) folds into the AV-Nsp11N/CoV-Nsp15M domain. One can recognise a NendoU domain in the interval 75–216 (EPRSDVERDF…EDGSIKTCYP (142 aa)). Active-site residues include H104, H119, K159, K263, D347, K391, and E424. One can recognise a Nidovirus-type SAM-dependent 2'-O-MTase domain in the interval 219–518 (QSAWTCGYNM…NTSFTSDSFV (300 aa)).

Its function is as follows. The replicase polyprotein of coronaviruses is a multifunctional protein: it contains the activities necessary for the transcription of negative stranded RNA, leader RNA, subgenomic mRNAs and progeny virion RNA as well as proteinases responsible for the cleavage of the polyprotein into functional products. Functionally, nendoU is a Mn(2+)-dependent, uridylate-specific enzyme, which leaves 2'-3'-cyclic phosphates 5' to the cleaved bond. The chain is Replicase polyprotein 1ab (rep) from Gallus gallus (Chicken).